A 261-amino-acid polypeptide reads, in one-letter code: uncharacterized protein (261 aa).

In terms of domain architecture, ABC transporter spans 1–236 (MEIKEITIIG…SRKINEVDNW (236 aa)). Residue 36–43 (GPTGSGKS) coordinates ATP.

The protein belongs to the ABC transporter superfamily.

This is an uncharacterized protein from Methanocaldococcus jannaschii (strain ATCC 43067 / DSM 2661 / JAL-1 / JCM 10045 / NBRC 100440) (Methanococcus jannaschii).